Reading from the N-terminus, the 2641-residue chain is Inverse autotransporter adhesin YeeJ (2641 aa).

An N-terminal signal peptide occupies residues Met-1–Ala-26. The LysM domain occupies Val-50–Val-98. Residues Pro-99–Leu-118 are disordered. The inverse autotransporter stretch occupies residues Thr-125–Asn-400. Positions Gln-513 to Val-605 are invasin 3 domain. Big-1 domains follow at residues His-617–Ile-711, Ile-721–Val-815, Gln-822–Ile-913, Ala-920–Val-1017, Val-1024–Ala-1116, Gln-1123–Val-1220, Val-1227–Ala-1319, Gln-1326–Val-1423, Gln-1430–Ile-1523, Ile-1531–Val-1633, His-1641–Val-1734, Glu-1741–Thr-1837, Gln-1844–Ile-1941, Lys-1948–Val-2032, Phe-2048–Ile-2139, Lys-2142–Thr-2236, and Val-2244–Val-2336. The segment at Lys-2538–Leu-2641 is C-type lectin domain.

It belongs to the intimin/invasin family.

The protein resides in the cell outer membrane. Its function is as follows. A probable inverse autotransporter, it may be involved in biofilm formation and cell adhesion. May bind peptidoglycan via its LysM domain. Upon overexpression shows increased mature biofilm formation. This chain is Inverse autotransporter adhesin YeeJ, found in Escherichia coli O17:K52:H18 (strain UMN026 / ExPEC).